The following is a 145-amino-acid chain: Large ribosomal subunit protein uL13 (145 aa).

It belongs to the universal ribosomal protein uL13 family. In terms of assembly, part of the 50S ribosomal subunit.

In terms of biological role, this protein is one of the early assembly proteins of the 50S ribosomal subunit, although it is not seen to bind rRNA by itself. It is important during the early stages of 50S assembly. The polypeptide is Large ribosomal subunit protein uL13 (Bacillus mycoides (strain KBAB4) (Bacillus weihenstephanensis)).